The primary structure comprises 425 residues: L-cysteine:1D-myo-inositol 2-amino-2-deoxy-alpha-D-glucopyranoside ligase (425 aa).

Cysteine 43 is a Zn(2+) binding site. L-cysteinyl-5'-AMP-binding positions include 43–46, threonine 58, and 81–83; these read CGIT and NVT. A 'HIGH' region motif is present at residues 45–55; the sequence is ITPYDATHIGH. The 'ERGGDP' region signature appears at 195-200; sequence ERGGDP. Tryptophan 236 serves as a coordination point for L-cysteinyl-5'-AMP. A Zn(2+)-binding site is contributed by cysteine 240. 258–260 provides a ligand contact to L-cysteinyl-5'-AMP; the sequence is GSD. Histidine 265 contacts Zn(2+). L-cysteinyl-5'-AMP is bound at residue valine 295. Positions 301–305 match the 'KMSKS' region motif; sequence KMSKS.

This sequence belongs to the class-I aminoacyl-tRNA synthetase family. MshC subfamily. Monomer. Zn(2+) serves as cofactor.

It carries out the reaction 1D-myo-inositol 2-amino-2-deoxy-alpha-D-glucopyranoside + L-cysteine + ATP = 1D-myo-inositol 2-(L-cysteinylamino)-2-deoxy-alpha-D-glucopyranoside + AMP + diphosphate + H(+). Its function is as follows. Catalyzes the ATP-dependent condensation of GlcN-Ins and L-cysteine to form L-Cys-GlcN-Ins. The sequence is that of L-cysteine:1D-myo-inositol 2-amino-2-deoxy-alpha-D-glucopyranoside ligase from Sanguibacter keddieii (strain ATCC 51767 / DSM 10542 / NCFB 3025 / ST-74).